The sequence spans 307 residues: Glutaminase (307 aa).

Substrate contacts are provided by serine 66, asparagine 116, glutamate 160, asparagine 167, tyrosine 191, tyrosine 243, and valine 261.

The protein belongs to the glutaminase family. In terms of assembly, homotetramer.

The catalysed reaction is L-glutamine + H2O = L-glutamate + NH4(+). The polypeptide is Glutaminase (Saccharophagus degradans (strain 2-40 / ATCC 43961 / DSM 17024)).